Here is a 349-residue protein sequence, read N- to C-terminus: Phosphate acetyltransferase (349 aa).

The protein belongs to the phosphate acetyltransferase and butyryltransferase family.

Its subcellular location is the cytoplasm. The catalysed reaction is acetyl-CoA + phosphate = acetyl phosphate + CoA. It participates in metabolic intermediate biosynthesis; acetyl-CoA biosynthesis; acetyl-CoA from acetate: step 2/2. The sequence is that of Phosphate acetyltransferase (pta) from Rickettsia felis (strain ATCC VR-1525 / URRWXCal2) (Rickettsia azadi).